A 102-amino-acid chain; its full sequence is NADH-quinone oxidoreductase subunit K 1 (102 aa).

3 consecutive transmembrane segments (helical) span residues 6 to 26, 31 to 51, and 65 to 85; these read LNAY…GVLV, LAIL…FVAF, and FLVI…TVLL.

This sequence belongs to the complex I subunit 4L family. As to quaternary structure, NDH-1 is composed of 14 different subunits. Subunits NuoA, H, J, K, L, M, N constitute the membrane sector of the complex.

It is found in the cell membrane. The enzyme catalyses a quinone + NADH + 5 H(+)(in) = a quinol + NAD(+) + 4 H(+)(out). Its function is as follows. NDH-1 shuttles electrons from NADH, via FMN and iron-sulfur (Fe-S) centers, to quinones in the respiratory chain. The immediate electron acceptor for the enzyme in this species is believed to be a menaquinone. Couples the redox reaction to proton translocation (for every two electrons transferred, four hydrogen ions are translocated across the cytoplasmic membrane), and thus conserves the redox energy in a proton gradient. This is NADH-quinone oxidoreductase subunit K 1 from Symbiobacterium thermophilum (strain DSM 24528 / JCM 14929 / IAM 14863 / T).